The chain runs to 152 residues: Large ribosomal subunit protein bL9 (152 aa).

This sequence belongs to the bacterial ribosomal protein bL9 family.

Functionally, binds to the 23S rRNA. This chain is Large ribosomal subunit protein bL9, found in Pelagibacter ubique (strain HTCC1062).